Reading from the N-terminus, the 488-residue chain is Inosine-5'-monophosphate dehydrogenase (488 aa).

CBS domains lie at 93 to 149 (VVTD…NQPV) and 153 to 214 (MTPK…CKDE). Residues D248 and 248–250 (DSS) contribute to the NAD(+) site. N6-acetyllysine is present on K267. 298–300 (GIG) contributes to the NAD(+) binding site. K(+) is bound by residues G300 and G302. S303 is an IMP binding site. C305 contributes to the K(+) binding site. C305 functions as the Thioimidate intermediate in the catalytic mechanism. Residues 338-340 (DGG), 361-362 (GS), and 385-389 (YRGMG) contribute to the IMP site. R401 (proton acceptor) is an active-site residue. E415 is an IMP binding site. Residue K428 is modified to N6-acetyllysine. Positions 469, 470, and 471 each coordinate K(+).

This sequence belongs to the IMPDH/GMPR family. In terms of assembly, homotetramer. K(+) is required as a cofactor.

It catalyses the reaction IMP + NAD(+) + H2O = XMP + NADH + H(+). It functions in the pathway purine metabolism; XMP biosynthesis via de novo pathway; XMP from IMP: step 1/1. Mycophenolic acid (MPA) is a non-competitive inhibitor that prevents formation of the closed enzyme conformation by binding to the same site as the amobile flap. In contrast, mizoribine monophosphate (MZP) is a competitive inhibitor that induces the closed conformation. MPA is a potent inhibitor of mammalian IMPDHs but a poor inhibitor of the bacterial enzymes. MZP is a more potent inhibitor of bacterial IMPDH. In terms of biological role, catalyzes the conversion of inosine 5'-phosphate (IMP) to xanthosine 5'-phosphate (XMP), the first committed and rate-limiting step in the de novo synthesis of guanine nucleotides, and therefore plays an important role in the regulation of cell growth. This Escherichia coli O157:H7 protein is Inosine-5'-monophosphate dehydrogenase.